We begin with the raw amino-acid sequence, 955 residues long: Disintegrin and metalloproteinase domain-containing protein 19 (955 aa).

Residues 1-25 form the signal peptide; that stretch reads MPGGAGAARLCLLAFALQPLRPRAA. The propeptide occupies 26-202; the sequence is REPGWTRGSE…QTKKRPRRMK (177 aa). Positions 130–137 match the Cysteine switch motif; sequence STCRGIRG. C132 lines the Zn(2+) pocket. N144 carries N-linked (GlcNAc...) asparagine glycosylation. The Extracellular portion of the chain corresponds to 203 to 699; it reads REDLNSMKYV…IDSGPMPPES (497 aa). In terms of domain architecture, Peptidase M12B spans 210-408; it reads KYVELYLVAD…GGGMCLSNMP (199 aa). 3 disulfide bridges follow: C320–C403, C360–C387, and C361–C370. Residue H345 coordinates Zn(2+). The active site involves E346. Zn(2+) is bound by residues H349 and H355. Residues 416–502 form the Disintegrin domain; that stretch reads GRRCGNGYLE…HCPTNFYQMD (87 aa). N444 and N447 each carry an N-linked (GlcNAc...) asparagine glycan. Residues C474 and C494 are joined by a disulfide bond. A glycan (N-linked (GlcNAc...) asparagine) is linked at N645. The EGF-like domain maps to 650 to 682; sequence ETEGCGKKCNGHGVCNNNQNCHCLPGWAPPFCN. Cystine bridges form between C654–C664, C658–C670, and C672–C681. Residues 700-720 traverse the membrane as a helical segment; it reads VGPVVAGVLVAILVLAVLMLM. The Cytoplasmic portion of the chain corresponds to 721-955; it reads YYCCRQNNKL…AKHSCFLVPA (235 aa). The span at 753–771 shows a compositional bias: polar residues; it reads SQNSGTGHANPTFKLQTPQ. Residues 753-917 form a disordered region; that stretch reads SQNSGTGHAN…LKVKAGTRGL (165 aa). Pro residues-rich tracts occupy residues 787–796 and 833–844; these read SQPPPRPPPD and RPPPSRPIPPAP. Positions 833 to 844 match the SH3-binding motif; the sequence is RPPPSRPIPPAP.

Interacts with SH3PXD2A. Zn(2+) is required as a cofactor. In terms of processing, the precursor is cleaved by a furin endopeptidase. In terms of tissue distribution, expressed in many normal organ tissues and several cancer cell lines.

It localises to the membrane. Its function is as follows. Participates in the proteolytic processing of beta-type neuregulin isoforms which are involved in neurogenesis and synaptogenesis, suggesting a regulatory role in glial cell. Also cleaves alpha-2 macroglobulin. May be involved in osteoblast differentiation and/or osteoblast activity in bone. The sequence is that of Disintegrin and metalloproteinase domain-containing protein 19 (ADAM19) from Homo sapiens (Human).